A 309-amino-acid chain; its full sequence is Sodium/potassium-transporting ATPase subunit beta-1 (309 aa).

Residues 1 to 45 (MSKNNGKGAKGEFEFPQPAKKQTFSEMIYNPQEGTFFGRTGKSWS) are Cytoplasmic-facing. Residues 46-66 (QLLLFYTIFYIVLAALFTICM) form a helical; Signal-anchor for type II membrane protein membrane-spanning segment. At 67–309 (QGLLSTISDT…GSVTFQILLD (243 aa)) the chain is on the extracellular side. Asparagine 133 is a glycosylation site (N-linked (GlcNAc...) asparagine). Disulfide bonds link cysteine 143–cysteine 155 and cysteine 165–cysteine 179. N-linked (GlcNAc...) asparagine glycosylation occurs at asparagine 211. Cysteines 225 and 282 form a disulfide.

The protein belongs to the X(+)/potassium ATPases subunit beta family. In terms of assembly, the sodium/potassium-transporting ATPase is composed of a catalytic alpha subunit, an auxiliary non-catalytic beta subunit and an additional regulatory subunit. Interacts with nkain. In terms of tissue distribution, in embryos, it is expressed in the neurons of the CNS and PNS, in Garland cells and posterior spiracles. In adults, it is concentrated in the thorax and abdomen (muscle tissue, digestive system and Malpighian tubules) and weakly expressed in the head. Expression is diffuse in the nervous system.

Its subcellular location is the cell membrane. Its function is as follows. This is the non-catalytic component of the active enzyme, which catalyzes the hydrolysis of ATP coupled with the exchange of Na(+) and K(+) ions across the plasma membrane. The beta subunit regulates, through assembly of alpha/beta heterodimers, the number of sodium pumps transported to the plasma membrane. The sequence is that of Sodium/potassium-transporting ATPase subunit beta-1 (nrv1) from Drosophila melanogaster (Fruit fly).